The chain runs to 176 residues: Nucleoside triphosphate/diphosphate phosphatase (176 aa).

Residue Arg23 is the Proton donor of the active site. Positions 87, 103, 105, 107, 120, and 123 each coordinate Mg(2+).

This sequence belongs to the Ntdp family. The cofactor is Mg(2+).

It carries out the reaction a ribonucleoside 5'-triphosphate + H2O = a ribonucleoside 5'-diphosphate + phosphate + H(+). The catalysed reaction is a ribonucleoside 5'-diphosphate + H2O = a ribonucleoside 5'-phosphate + phosphate + H(+). Functionally, has nucleoside phosphatase activity towards nucleoside triphosphates and nucleoside diphosphates. This is Nucleoside triphosphate/diphosphate phosphatase from Bacillus cytotoxicus (strain DSM 22905 / CIP 110041 / 391-98 / NVH 391-98).